A 155-amino-acid polypeptide reads, in one-letter code: Small ribosomal subunit protein bS6 (155 aa).

Residues 94–155 are disordered; the sequence is VKQEGPLPTP…TPELEEQVKS (62 aa). Residues 103-112 show a composition bias toward polar residues; that stretch reads PRSSNKSSNQ. A compositionally biased stretch (basic and acidic residues) spans 113–141; that stretch reads AEKKENENIDSANKSEPKADETDNKKKIT.

This sequence belongs to the bacterial ribosomal protein bS6 family.

Binds together with bS18 to 16S ribosomal RNA. The sequence is that of Small ribosomal subunit protein bS6 from Prochlorococcus marinus (strain MIT 9515).